Here is a 224-residue protein sequence, read N- to C-terminus: UPF0758 protein VS_0182 (224 aa).

The interval 1 to 21 (MPISKMPVESMPREKLLSRGP) is disordered. The 123-residue stretch at 102 to 224 (ALTSPSHTKL…VISFAERGWI (123 aa)) folds into the MPN domain. Zn(2+)-binding residues include His173, His175, and Asp186. The JAMM motif motif lies at 173-186 (HNHPSGVAEPSQAD).

Belongs to the UPF0758 family.

The protein is UPF0758 protein VS_0182 of Vibrio atlanticus (strain LGP32) (Vibrio splendidus (strain Mel32)).